The following is a 279-amino-acid chain: Energy-coupling factor transporter ATP-binding protein EcfA1 (279 aa).

The ABC transporter domain occupies 5-240; sequence IELKKVTFNY…GDELLQLGLD (236 aa). 40–47 is an ATP binding site; that stretch reads GHNGSGKS.

The protein belongs to the ABC transporter superfamily. Energy-coupling factor EcfA family. As to quaternary structure, forms a stable energy-coupling factor (ECF) transporter complex composed of 2 membrane-embedded substrate-binding proteins (S component), 2 ATP-binding proteins (A component) and 2 transmembrane proteins (T component).

The protein resides in the cell membrane. In terms of biological role, ATP-binding (A) component of a common energy-coupling factor (ECF) ABC-transporter complex. Unlike classic ABC transporters this ECF transporter provides the energy necessary to transport a number of different substrates. This Streptococcus pyogenes serotype M5 (strain Manfredo) protein is Energy-coupling factor transporter ATP-binding protein EcfA1.